A 227-amino-acid polypeptide reads, in one-letter code: [D-Ala2]-deltorphins (227 aa).

Positions 1-20 are cleaved as a signal peptide; sequence MSFLKKSLLLVLFLGLVSHS. The propeptide occupies 21 to 46; the sequence is VCKEEKRETEEENENEEENHEVGSEM. The segment at 22-227 is disordered; the sequence is CKEEKRETEE…DVVGGEAKKM (206 aa). A compositionally biased stretch (acidic residues) spans 30 to 39; sequence EEENENEEEN. Ala50 is subject to D-alanine (Ala). Positions 57–75 are excised as a propeptide; it reads DTEEKNENEEENQEEGSEM. Acidic residues predominate over residues 62 to 72; that stretch reads NENEEENQEEG. The segment covering 73-87 has biased composition (basic and acidic residues); it reads SEMKRYAFGYPKREP. Ala79 is modified (D-alanine (Ala)). Positions 86–104 are excised as a propeptide; that stretch reads EPEEENENEEENHEEGSEM. Residues 88–98 are compositionally biased toward acidic residues; the sequence is EEENENEEENH. A compositionally biased stretch (basic and acidic residues) spans 99 to 108; sequence EEGSEMKRYA. Position 108 is a D-alanine (Ala) (Ala108). Glycine amide is present on Gly113. Positions 115–140 are excised as a propeptide; it reads EAKKMKREPEEENENEEENHEEGSEM. Over residues 124-134 the composition is skewed to acidic residues; that stretch reads EEENENEEENH. The span at 135 to 144 shows a compositional bias: basic and acidic residues; it reads EEGSEMKRYA. At Ala144 the chain carries D-alanine (Ala). Gly149 bears the Glycine amide mark. A propeptide spanning residues 151-176 is cleaved from the precursor; the sequence is EAKKMKREPEEENENEEENHEEGSEM. Residues 160-170 show a composition bias toward acidic residues; sequence EEENENEEENH. Residues 171-180 are compositionally biased toward basic and acidic residues; that stretch reads EEGSEMKRYA. A D-alanine (Ala) modification is found at Ala180. The residue at position 185 (Gly185) is a Glycine amide. Positions 187 to 212 are excised as a propeptide; that stretch reads EAKKMKREPEEENENEEENHEEGSEM. Residues 196–206 are compositionally biased toward acidic residues; that stretch reads EEENENEEENH. The segment covering 207–216 has biased composition (basic and acidic residues); it reads EEGSEMKRYA. Ala216 carries the post-translational modification D-alanine (Ala). At Gly221 the chain carries Glycine amide. Residues 223–227 constitute a propeptide that is removed on maturation; sequence EAKKM.

This sequence belongs to the frog skin active peptide (FSAP) family. Dermorphin subfamily. Expressed by the skin glands.

The protein resides in the secreted. Functionally, deltorphin is a heptapeptide with a very potent opiate-like activity. Has high affinity and selectivity for delta-type opioid receptors. The two dermorphin-like peptides have a similar affinity and selectivity for the mu opioid receptor as dermorphin. This chain is [D-Ala2]-deltorphins, found in Phyllomedusa bicolor (Two-colored leaf frog).